Here is a 542-residue protein sequence, read N- to C-terminus: Neurofilament light polypeptide (542 aa).

Ser2 carries the N-acetylserine modification. Residues 2-93 are head; the sequence is SSFSYEPYFS…KSIRTQEKAQ (92 aa). An O-linked (GlcNAc) threonine glycan is attached at Thr21. An Asymmetric dimethylarginine; alternate modification is found at Arg23. The residue at position 23 (Arg23) is an Omega-N-methylarginine; alternate. The O-linked (GlcNAc) serine glycan is linked to Ser27. Arg30 carries the omega-N-methylarginine modification. Tyr43 is subject to Phosphotyrosine. Residues Ser56, Ser67, and Ser103 each carry the phosphoserine modification. Positions 90-401 constitute an IF rod domain; it reads EKAQLQDLND…KLLEGEETRL (312 aa). The coil 1A stretch occupies residues 94–125; that stretch reads LQDLNDRFASFIERVHELEQQNKVLEAELLVL. A linker 1 region spans residues 126–138; that stretch reads RQKHSEPSRFRAL. Residues 139-234 form a coil 1B region; it reads YEQEIRDLRL…KVHEEEIAEL (96 aa). The segment at 235 to 253 is linker 12; it reads QAQIQYAQISVEMDVSSKP. Residues 254-272 are coil 2A; the sequence is DLSAALKDIRAQYEKLAAK. Residues 273–281 are linker 2; it reads NMQNAEEWF. Residues 282–397 form a coil 2B region; the sequence is KSRFTVLTES…AAYRKLLEGE (116 aa). The tract at residues 382–392 is epitope; recognized by IF-specific monoclonal antibody; it reads ALDIEIAAYRK. The tract at residues 398-444 is tail, subdomain A; the sequence is ETRLSFTSVGSITSGYSQSSQVFGRSAYSGLQSSSYLMSARAFPAYY. The interval 398–542 is tail; sequence ETRLSFTSVG…GEEQAAKKKD (145 aa). The tract at residues 445–542 is tail, subdomain B (acidic); that stretch reads TSHVQEEQSE…GEEQAAKKKD (98 aa). The tract at residues 451 to 542 is disordered; sequence EQSEVEETIE…GEEQAAKKKD (92 aa). Ser453 bears the Phosphoserine mark. The span at 460–471 shows a compositional bias: basic and acidic residues; it reads EATKAEEAKDEP. Over residues 472–527 the composition is skewed to acidic residues; it reads PSEGEAEEEEKEKEEGEEEEGAEEEEAAKDESEDAKEEEGGEGEEEDTKESEEEEK. Ser473 and Ser503 each carry phosphoserine. Thr519 carries the phosphothreonine modification. A phosphoserine mark is found at Ser522 and Ser531. Residues 528–542 show a composition bias toward basic and acidic residues; the sequence is KEESAGEEQAAKKKD.

The protein belongs to the intermediate filament family. As to quaternary structure, forms homodimers (in vitro). Forms heterodimers with NEFH or NEFM; which can further hetero-oligomerize (in vitro). Forms heterodimers with INA (in vitro). Interacts with ARHGEF28. Interacts with TRIM2. In terms of processing, O-glycosylated; contains three N-acetylglucosamine side chains. Phosphorylated in the head and rod regions by the PKC kinase PKN1, leading to the inhibition of polymerization. Post-translationally, ubiquitinated in the presence of TRIM2 and UBE2D1. Expressed in the dorsal root ganglion neurons (at protein level).

Its subcellular location is the cell projection. The protein resides in the axon. It localises to the cytoplasm. The protein localises to the cytoskeleton. Its function is as follows. Neurofilaments usually contain three intermediate filament proteins: NEFL, NEFM, and NEFH which are involved in the maintenance of neuronal caliber. May additionally cooperate with the neuronal intermediate filament proteins PRPH and INA to form neuronal filamentous networks. The chain is Neurofilament light polypeptide (Nefl) from Rattus norvegicus (Rat).